We begin with the raw amino-acid sequence, 72 residues long: Probable movement protein p8 (72 aa).

Positions 16–58 (GRARSVEGKKHNGSGLTGVKRHAVSETSQKSQQGTGNGTMTNI) are disordered. The segment covering 40 to 58 (SETSQKSQQGTGNGTMTNI) has biased composition (polar residues).

It belongs to the carmovirus/necrovirus/panicovirus movement protein p8 family.

Cell-to-cell movement. This Tobacco necrosis virus (strain A) (TNV-A) protein is Probable movement protein p8.